The primary structure comprises 84 residues: Putative pelota-like protein YCL001W-B (84 aa).

This sequence belongs to the eukaryotic release factor 1 family. Pelota subfamily. Highly divergent.

The sequence is that of Putative pelota-like protein YCL001W-B from Saccharomyces cerevisiae (strain ATCC 204508 / S288c) (Baker's yeast).